Reading from the N-terminus, the 89-residue chain is Large ribosomal subunit protein bL27 (89 aa).

A disordered region spans residues M1–G26. Basic and acidic residues predominate over residues N12 to G26.

This sequence belongs to the bacterial ribosomal protein bL27 family.

The polypeptide is Large ribosomal subunit protein bL27 (Desulforamulus reducens (strain ATCC BAA-1160 / DSM 100696 / MI-1) (Desulfotomaculum reducens)).